Consider the following 726-residue polypeptide: DNA ligase (726 aa).

NAD(+)-binding positions include 34-38, 83-84, and Glu115; these read DAEYD and SL. The active-site N6-AMP-lysine intermediate is the Lys117. Arg138, Glu190, Lys306, and Lys330 together coordinate NAD(+). Residues Cys424, Cys427, Cys442, and Cys448 each coordinate Zn(2+). Residues 608 to 698 enclose the BRCT domain; the sequence is SRGNALAGKT…RTADDQATPA (91 aa). The segment at 690–726 is disordered; it reads TADDQATPASDRRAATASVPPSDDAPGSPRQLDFDLT.

This sequence belongs to the NAD-dependent DNA ligase family. LigA subfamily. It depends on Mg(2+) as a cofactor. The cofactor is Mn(2+).

It carries out the reaction NAD(+) + (deoxyribonucleotide)n-3'-hydroxyl + 5'-phospho-(deoxyribonucleotide)m = (deoxyribonucleotide)n+m + AMP + beta-nicotinamide D-nucleotide.. In terms of biological role, DNA ligase that catalyzes the formation of phosphodiester linkages between 5'-phosphoryl and 3'-hydroxyl groups in double-stranded DNA using NAD as a coenzyme and as the energy source for the reaction. It is essential for DNA replication and repair of damaged DNA. In Roseiflexus sp. (strain RS-1), this protein is DNA ligase.